A 242-amino-acid chain; its full sequence is UPF0273 protein MJ1359 (242 aa).

One can recognise a KaiC domain in the interval 2-242; it reads KRVKTGIPGM…VYPDKVLKLR (241 aa). 29-36 serves as a coordination point for ATP; the sequence is GGPGTGKS.

Belongs to the UPF0273 family.

The polypeptide is UPF0273 protein MJ1359 (Methanocaldococcus jannaschii (strain ATCC 43067 / DSM 2661 / JAL-1 / JCM 10045 / NBRC 100440) (Methanococcus jannaschii)).